A 1857-amino-acid polypeptide reads, in one-letter code: MFGLKVKKKRNKAEKGLILANKAAKDSQGDTEALQEEPSHQEGPRGDLVHDDASIFPVPSASPKRRSKLLTKIHDGEVRSQNYQIAITITEARQLVGENIDPVVTIEIGDEKKQSTVKEGTNSPFYNEYFVFDFIGPQVHLFDKIIKISVFHHKLIGSVLIGSFKVDLGTVYNQPGHQFCNKWALLTDPGDIRTGTKGYLKCDISVMGKGDVLKTSPKTSDTEEPIEKNLLIPNGFPLERPWARFYVRLYKAEGLPKMNSSIMANVTKAFVGDSKDLVDPFVEVSFAGQMGRTTVQKNCADPVWHEQVIFKEMFPPLCRRVKIQVWDEGSMNDVALATHFIDLKKISNEQDGDKGFLPTFGPAWINLYGSPRNHSLMDDYQEMNEGFGEGVSFRGRILVEIAVEILSGRAQESKFSKALKELKLPSKDKDSKSSKGKDKADKTEDGKSQQASNKTNSTEVEVESFDVPPEIVPEKNEEFLLFGAFFEATMIDRKIGDKPISFEVSIGNFGNLIDGGSHHGSKKSAESAEEDLLPLLHEGQGDVAHDVPIPMASTTHPEKPLVTEGNRNYNYLPFEAKKPCVYFISSWGDQTFRLHWSNMLEKMADFLEESIEEVRELIKISQEAPEEKMKTVLSDFISRSSAFISEAEKKPKMLNQTTLDKKRLTLCWQELEAMCKEAKGIIQQQKKKLSVDEMIHEAQNFVEKIRFLVDEPQHTIPDVFIWMLSNNRRVAYARIASKDLLYSPVAGQMGKHCGKIKTHFLKPPGKRPAGWSVQAKVDVYLWLGSIKHASAILDNLPVGYEAEMSSKGAGTNHPPSNLLYQEQHVFQLRAHMYQARGLIAADSNGLSDPFAKVTFLSHCQTTKIISQTLSPTWNQMLLFNDLVLHGDVKELAESPPLVVVELYDSDAVGKPEYLGATVAAPVVKLADQDYEPPRLCYHPIFCGNLSGGDLLAVFELLQVPPSGLQGLPPVEPPDITQIYPVPANIRPVLSKYRVEVLFWGVREMKKVQLLSVDRPQALIECGGQGVKSCVIQSYKNNPNFSIQADAFEVELPENELLHPPLSICVVDWRAFGRSTLVGTYTINYLKQFLCKLREPLAPITQVDGTQPGHDISDSLTATESSGAHSSSQDPPADHIYVDVEPPPTVVPDSAQAQPAILVDVPDSSPMLEPEHTPVAQEPPKDGKPKDPRKPSRRSTKRRKRTIADESAENVIDWWSKYYASLKKAQKAKERNPKGKKGNTEAKPDEVVVDIEDGPKKKKDKMLKKKPKDDGIPNLAILQIYDGDLESEFNNFEDWVKTFELFRGKSTEDDHGLDGDRVIGKFKGSFCIYKSPQDSSSEDSGQLRIQQGIPPNHPVTVLIRVYIVAAFNLSPADPDGKSDPYIVIKLGKTEIKDRDKYIPKQLNPVFGRSFEIQATFPKESLLSILIYDHDMIGTDDLIGETKIDLENRFYSKHRAICGLQSQYEIEGYNAWRDTSKPTEILTKLCKDNKLDGPYFHPGKIQIGNQVFSGKTIFTEEDTDETVESYEHLALKVLHSWEDIPEVGCRLVPEHIETRPLYHKDKPGMEQGRLQMWVDMFPKDMPQPGPPVDISPRRPKGYELRVTIWNTEDVILEDENIFTGQKSSDIYVKGWLKGLEDDKQETDVHYNSLTGEGNFNWRFLFPFQYLPAEKQMVITKRENIFSLEKMECKTPAVLVLQVWDFERLSSDDFLGTLEMNLNSFPRAAKSAKACDLAKFENASEETKISIFQQKRVRGWWPFSKSKELTGKVEAEFHLVTAEEAEKNPVGKARKEPEPLAKPNRPDTSFSWFMSPFKCLYYLIWKNYKKYIIIAFILIILIIFLVLFIYTLPGAISRRIVVGS.

Topologically, residues 1–1824 are cytoplasmic; sequence MFGLKVKKKR…YLIWKNYKKY (1824 aa). Residues 15–63 form a disordered region; sequence KGLILANKAAKDSQGDTEALQEEPSHQEGPRGDLVHDDASIFPVPSASP. Residues 37-53 are compositionally biased toward basic and acidic residues; that stretch reads EPSHQEGPRGDLVHDDA. C2 domains follow at residues 65–181 and 225–356; these read RRSK…QFCN and PIEK…DKGF. The span at 426–447 shows a compositional bias: basic and acidic residues; it reads SKDKDSKSSKGKDKADKTEDGK. Residues 426–469 form a disordered region; it reads SKDKDSKSSKGKDKADKTEDGKSQQASNKTNSTEVEVESFDVPP. A compositionally biased stretch (polar residues) spans 448 to 459; the sequence is SQQASNKTNSTE. C2 domains follow at residues 810-937 and 969-1099; these read GTNH…RLCY and PVEP…LAPI. 4 residues coordinate Ca(2+): aspartate 842, aspartate 848, aspartate 904, and aspartate 906. Disordered regions lie at residues 1101 to 1148, 1161 to 1203, and 1224 to 1246; these read QVDG…VVPD, PDSS…RTIA, and AQKA…PDEV. A compositionally biased stretch (polar residues) spans 1113-1129; that stretch reads DSLTATESSGAHSSSQD. Positions 1178–1189 are enriched in basic and acidic residues; the sequence is PPKDGKPKDPRK. The segment covering 1190 to 1200 has biased composition (basic residues); the sequence is PSRRSTKRRKR. Positions 1226–1245 are enriched in basic and acidic residues; that stretch reads KAKERNPKGKKGNTEAKPDE. C2 domains are found at residues 1338 to 1457 and 1578 to 1729; these read DSGQ…AICG and DMPQ…KACD. Positions 1372, 1378, 1427, 1429, and 1435 each coordinate Ca(2+). Residues 1825–1845 form a helical membrane-spanning segment; sequence IIIAFILIILIIFLVLFIYTL. Residues 1846–1857 are Extracellular-facing; sequence PGAISRRIVVGS.

It belongs to the ferlin family. Ca(2+) serves as cofactor.

It is found in the membrane. This chain is Fer-1-like protein 6 (FER1L6), found in Homo sapiens (Human).